We begin with the raw amino-acid sequence, 244 residues long: 14-3-3 protein homolog 1 (244 aa).

Belongs to the 14-3-3 family.

This is 14-3-3 protein homolog 1 from Echinococcus granulosus (Hydatid tapeworm).